Reading from the N-terminus, the 681-residue chain is DNA ligase (681 aa).

NAD(+) is bound by residues 45-49 (DFDFD), 94-95 (SL), and E120. The active-site N6-AMP-lysine intermediate is the K122. 4 residues coordinate NAD(+): R143, E177, K289, and K313. C403, C406, C421, and C426 together coordinate Zn(2+). A BRCT domain is found at 593–681 (ADQQPFAGQS…SLKIDFKNLI (89 aa)).

This sequence belongs to the NAD-dependent DNA ligase family. LigA subfamily. Mg(2+) serves as cofactor. Requires Mn(2+) as cofactor.

It carries out the reaction NAD(+) + (deoxyribonucleotide)n-3'-hydroxyl + 5'-phospho-(deoxyribonucleotide)m = (deoxyribonucleotide)n+m + AMP + beta-nicotinamide D-nucleotide.. In terms of biological role, DNA ligase that catalyzes the formation of phosphodiester linkages between 5'-phosphoryl and 3'-hydroxyl groups in double-stranded DNA using NAD as a coenzyme and as the energy source for the reaction. It is essential for DNA replication and repair of damaged DNA. The chain is DNA ligase from Leptospira interrogans serogroup Icterohaemorrhagiae serovar Lai (strain 56601).